The primary structure comprises 226 residues: Survival motor neuron protein (226 aa).

Residues 35 to 44 (ADSTNKREEE) are compositionally biased toward basic and acidic residues. Residues 35 to 68 (ADSTNKREEENAAAAEEEAGEISATGGATSPEPV) are disordered. The 60-residue stretch at 69-128 (SFKVGDYARATYVDGVDYEGAVVSINEEKGTCVLRYLGYENEQEVLLVDLLPSWGKRVRR) folds into the Tudor domain. Positions 137–172 (DEDEQLSRPKASAGSHSKTPKSSRRSRISGGLVMPP) are disordered. The span at 154 to 163 (KTPKSSRRSR) shows a compositional bias: basic residues. Positions 159 to 226 (SRRSRISGGL…TSGKKKTPKK (68 aa)) are required for homodimerization.

It belongs to the SMN family. Homodimer (via C-terminal region). Component of the core survival motor neuron (SMN) complex composed of Smn, Gem2, Gem3, rig/Gem5 and one of 3 almost identical Gem4 paralogs encoded by Glos/Gem4a, Gem4b or Gem4c. Interacts with Gem3 (via C-terminus); the interaction is direct and stabilizes Smn. Part of a minimal SMN complex composed of Smn and Gem2 only; this complex is active in UsnRNP assembly. The SMN complex associates with the entire set of spliceosomal snRNP Sm proteins, SmB, SmD1, SmD2, SmD3, SmE, SmF and SmG, and with the snRNP-specific proteins snRNP-U1-70K, U2A, snf/U1A and U5-116KD. Interacts with Glos/Gem4a; the interaction is probably indirect. Interacts with Sbat and Vlet; Sbat and Vlet, along with Hez, may form an accessory subcomplex involved in SMN complex function. Interacts weakly with Gem3. Interacts with SmB and SmD1; the interaction is favored by methylation of the Sm proteins. Interacts with Actn; the interaction occurs in thoracic tissues and in adult flies. Interacts with Rpp20. Interacts with msk and Snup; these interactions are RNA-dependent. In late first instar larvae, expressed in pNBs. Expression increases as the pNBs enlarge, with the highest accumulation observed in dividing pNBs of second and third instar larvae. Enriched in type ID (thoracic and brain lobe), type IA and all the mira-expressing NBs of the brain lobes. In larvae, also expressed in muscle fibers. In larval and adult testis, expressed in germline stem cells and gonialblast, expression decreases as cells differentiate into cysts and spermatocytes. In adult fly thorax, expressed in the IFMs. In adult ovary, expressed in germline stem cells, cystoblasts, follicle cells, nurse cells and oocyte (at protein level). Also expressed in larval salivary glands.

Its subcellular location is the cytoplasm. It localises to the nucleus. The protein localises to the U-body. It is found in the gem. The protein resides in the cajal body. Its subcellular location is the myofibril. It localises to the sarcomere. The protein localises to the i band. It is found in the z line. Functionally, core component of the survival motor neuron (SMN) complex that plays an essential role in spliceosomal small nuclear ribonucleoprotein (snRNP) assembly in the cytoplasm, is required for pre-mRNA splicing in the nucleus and acts as a chaperone that discriminates target and non-target RNAs of Sm proteins. A major component of nuclear bodies known as gems (gemini of Cajal bodies) thought to be storage depots of excess SMN complexes. Required for normal expression of spliceosomal snRNAs and for U12 intron splicing. Required in cholinergic neurons, but not in motor neurons, to ensure correct splicing and proper levels of stas mRNA and normal neurotransmitter release by motor neurons. However, Smn is required in motor neurons, but not in cholinergic neurons, for normal motor behavior but plays no role in synaptic transmission according to a report. In both muscle and neurons, required for the formation of a normal neuromuscular junction (NMJ) structure. Plays a neuron-specific role in long-term homeostatic compensation at the larval NMJ. In the thorax of adult flies, required for Act88F, an indirect flight muscle (IFM)-specific actin, expression and for proper IFM myofibril formation. In nurse cells, oocytes and follicle cells, required to maintain normal organization of nuclear compartments including chromosomes, nucleoli, Cajal bodies, histone locus bodies and heterochromatin. Required for the functional integrity of the cytoplasmic U snRNP body (U body) and P body. Required in dividing postembryonic neuroblasts (pNBs) for the correct basal localization of mira. The tight regulation of its expression is critical for stem cell division, proliferation and differentiation in male germline and developing central nervous system (CNS). Required for tracheal terminal cell lumen formation. This chain is Survival motor neuron protein, found in Drosophila melanogaster (Fruit fly).